The sequence spans 195 residues: Peptidyl-tRNA hydrolase (195 aa).

Y17 is a tRNA binding site. The Proton acceptor role is filled by H22. Residues Y68, N70, and N116 each contribute to the tRNA site.

The protein belongs to the PTH family. In terms of assembly, monomer.

Its subcellular location is the cytoplasm. It carries out the reaction an N-acyl-L-alpha-aminoacyl-tRNA + H2O = an N-acyl-L-amino acid + a tRNA + H(+). Functionally, hydrolyzes ribosome-free peptidyl-tRNAs (with 1 or more amino acids incorporated), which drop off the ribosome during protein synthesis, or as a result of ribosome stalling. Its function is as follows. Catalyzes the release of premature peptidyl moieties from peptidyl-tRNA molecules trapped in stalled 50S ribosomal subunits, and thus maintains levels of free tRNAs and 50S ribosomes. The polypeptide is Peptidyl-tRNA hydrolase (Shewanella sp. (strain ANA-3)).